We begin with the raw amino-acid sequence, 424 residues long: 5-methylthioadenosine/S-adenosylhomocysteine deaminase (424 aa).

The Zn(2+) site is built by histidine 60 and histidine 62. Substrate-binding residues include glutamate 89 and histidine 181. Histidine 208 contacts Zn(2+). The substrate site is built by glutamate 211 and aspartate 296. Residue aspartate 296 coordinates Zn(2+).

The protein belongs to the metallo-dependent hydrolases superfamily. MTA/SAH deaminase family. Requires Zn(2+) as cofactor.

The enzyme catalyses S-adenosyl-L-homocysteine + H2O + H(+) = S-inosyl-L-homocysteine + NH4(+). The catalysed reaction is S-methyl-5'-thioadenosine + H2O + H(+) = S-methyl-5'-thioinosine + NH4(+). Its function is as follows. Catalyzes the deamination of 5-methylthioadenosine and S-adenosyl-L-homocysteine into 5-methylthioinosine and S-inosyl-L-homocysteine, respectively. Is also able to deaminate adenosine. The polypeptide is 5-methylthioadenosine/S-adenosylhomocysteine deaminase (Thermococcus kodakarensis (strain ATCC BAA-918 / JCM 12380 / KOD1) (Pyrococcus kodakaraensis (strain KOD1))).